The sequence spans 335 residues: Mycobacterial beta-ketoacyl-[acyl-carrier-protein] synthase III (335 aa).

Residues C122 and H258 contribute to the active site. Positions 259–263 (QANSR) are ACP-binding. Residue N289 is part of the active site.

Belongs to the thiolase-like superfamily. FabH family. In terms of assembly, homodimer.

Its subcellular location is the cytoplasm. The enzyme catalyses malonyl-[ACP] + dodecanoyl-CoA + H(+) = 3-oxotetradecanoyl-[ACP] + CO2 + CoA. Its pathway is lipid metabolism; fatty acid biosynthesis. The protein operates within lipid metabolism; mycolic acid biosynthesis. In terms of biological role, catalyzes the condensation reaction of fatty acid synthesis by the addition to an acyl acceptor of two carbons from malonyl-ACP. Catalyzes the first condensation reaction which initiates fatty acid synthesis and may therefore play a role in governing the total rate of fatty acid production. Possesses both acetoacetyl-ACP synthase and acetyl transacylase activities. Its substrate specificity determines the biosynthesis of branched-chain and/or straight-chain of fatty acids. The sequence is that of Mycobacterial beta-ketoacyl-[acyl-carrier-protein] synthase III from Mycolicibacterium paratuberculosis (strain ATCC BAA-968 / K-10) (Mycobacterium paratuberculosis).